The chain runs to 231 residues: Large ribosomal subunit protein uL1 (231 aa).

The protein belongs to the universal ribosomal protein uL1 family. In terms of assembly, part of the 50S ribosomal subunit.

In terms of biological role, binds directly to 23S rRNA. The L1 stalk is quite mobile in the ribosome, and is involved in E site tRNA release. Its function is as follows. Protein L1 is also a translational repressor protein, it controls the translation of the L11 operon by binding to its mRNA. This Thiobacillus denitrificans (strain ATCC 25259 / T1) protein is Large ribosomal subunit protein uL1.